Here is a 466-residue protein sequence, read N- to C-terminus: ATP synthase subunit beta (466 aa).

155–162 (GGAGVGKT) lines the ATP pocket.

The protein belongs to the ATPase alpha/beta chains family. As to quaternary structure, F-type ATPases have 2 components, CF(1) - the catalytic core - and CF(0) - the membrane proton channel. CF(1) has five subunits: alpha(3), beta(3), gamma(1), delta(1), epsilon(1). CF(0) has three main subunits: a(1), b(2) and c(9-12). The alpha and beta chains form an alternating ring which encloses part of the gamma chain. CF(1) is attached to CF(0) by a central stalk formed by the gamma and epsilon chains, while a peripheral stalk is formed by the delta and b chains.

The protein localises to the cell inner membrane. The enzyme catalyses ATP + H2O + 4 H(+)(in) = ADP + phosphate + 5 H(+)(out). Produces ATP from ADP in the presence of a proton gradient across the membrane. The catalytic sites are hosted primarily by the beta subunits. The chain is ATP synthase subunit beta from Bordetella bronchiseptica (strain ATCC BAA-588 / NCTC 13252 / RB50) (Alcaligenes bronchisepticus).